Here is a 265-residue protein sequence, read N- to C-terminus: Type III pantothenate kinase (265 aa).

Residue 6-13 (DVGNTNIV) participates in ATP binding. Substrate-binding positions include tyrosine 100 and 107–110 (GADR). Aspartate 109 functions as the Proton acceptor in the catalytic mechanism. Aspartate 129 serves as a coordination point for K(+). Threonine 132 lines the ATP pocket. Position 184 (threonine 184) interacts with substrate.

Belongs to the type III pantothenate kinase family. As to quaternary structure, homodimer. The cofactor is NH4(+). It depends on K(+) as a cofactor.

The protein localises to the cytoplasm. It carries out the reaction (R)-pantothenate + ATP = (R)-4'-phosphopantothenate + ADP + H(+). Its pathway is cofactor biosynthesis; coenzyme A biosynthesis; CoA from (R)-pantothenate: step 1/5. Functionally, catalyzes the phosphorylation of pantothenate (Pan), the first step in CoA biosynthesis. This chain is Type III pantothenate kinase, found in Alkaliphilus oremlandii (strain OhILAs) (Clostridium oremlandii (strain OhILAs)).